The sequence spans 622 residues: E3 ubiquitin-protein ligase RNF12-A (622 aa).

3 disordered regions span residues Met1–Leu26, Arg67–Arg386, and Asn473–Gly514. A compositionally biased stretch (low complexity) spans Ser11 to Ser21. Polar residues-rich tracts occupy residues Ser110–Ser138 and Ile147–Gln163. Basic and acidic residues predominate over residues Arg216–Ile242. The span at His247 to Ser256 shows a compositional bias: polar residues. The span at Ser272–Arg289 shows a compositional bias: low complexity. Positions Val300 to Glu317 are enriched in polar residues. The span at Thr318–Thr331 shows a compositional bias: low complexity. Residues Asn332–Arg341 show a composition bias toward polar residues. Basic and acidic residues predominate over residues Arg355 to Ile365. A compositionally biased stretch (polar residues) spans Ala366–Tyr382. The segment at Cys568 to Arg609 adopts an RING-type; atypical zinc-finger fold. A PDZ-binding motif is present at residues Glu619–Val622.

This sequence belongs to the RNF12 family. In terms of assembly, forms homodimers through the C-terminal region. The N-terminus interacts with the homeobox of LIM/homeobox factor lhx1/lim1, with lhx3/lim3 and lhx5/lim5, and with the N-terminus of ldb1. Shows overlapping expression with lhx1/lim1 and ldb1 in the gastrula mesoderm, and expression overlaps with ldb1 throughout early embryogenesis. After gastrulation, expression is gradually restricted to tissues originated from the ectoderm, the neuroectoderm, neural crest and epidermis, and subsequently to the neural tube as well as the head and tailbud region.

It is found in the nucleus. The catalysed reaction is S-ubiquitinyl-[E2 ubiquitin-conjugating enzyme]-L-cysteine + [acceptor protein]-L-lysine = [E2 ubiquitin-conjugating enzyme]-L-cysteine + N(6)-ubiquitinyl-[acceptor protein]-L-lysine.. It functions in the pathway protein modification; protein ubiquitination. Acts as an E3 ubiquitin-protein ligase specific for ldb1, mediating ubiquitination and proteasome-dependent degradation of excess ldb1 in a RING-dependent manner. Does not degrade ldb1 bound to lhx1/lim1, nor lim1 itself and thus contributes to the establishment of proper ldb1-lhx1/lim1 stoichiometry and the formation of a ldb1-lhx1/lim1 complex. Interferes with Spemann organizer function and suppresses secondary axis formation induced by ldb1 and lhx1/lim1. The protein is E3 ubiquitin-protein ligase RNF12-A (rnf12-a) of Xenopus laevis (African clawed frog).